The following is a 131-amino-acid chain: Ribosome-binding factor A (131 aa).

The protein belongs to the RbfA family. In terms of assembly, monomer. Binds 30S ribosomal subunits, but not 50S ribosomal subunits or 70S ribosomes.

It is found in the cytoplasm. Its function is as follows. One of several proteins that assist in the late maturation steps of the functional core of the 30S ribosomal subunit. Associates with free 30S ribosomal subunits (but not with 30S subunits that are part of 70S ribosomes or polysomes). Required for efficient processing of 16S rRNA. May interact with the 5'-terminal helix region of 16S rRNA. This chain is Ribosome-binding factor A, found in Christiangramia forsetii (strain DSM 17595 / CGMCC 1.15422 / KT0803) (Gramella forsetii).